The primary structure comprises 506 residues: Aminoaldehyde dehydrogenase 2 (506 aa).

A Na(+)-binding site is contributed by aspartate 101. Residues 161 to 163 (TPW) and 187 to 190 (KPSE) each bind NAD(+). Na(+) is bound at residue leucine 191. Residues 241 to 244 (STET) and glutamate 262 contribute to the NAD(+) site. Glutamate 262 serves as the catalytic Proton acceptor. Cysteine 297 serves as the catalytic Nucleophile. NAD(+) contacts are provided by glutamate 396 and tryptophan 462.

It belongs to the aldehyde dehydrogenase family.

The enzyme catalyses 4-aminobutanal + NAD(+) + H2O = 4-aminobutanoate + NADH + 2 H(+). The catalysed reaction is 3-aminopropanal + NAD(+) + H2O = beta-alanine + NADH + 2 H(+). It carries out the reaction 4-(trimethylamino)butanal + NAD(+) + H2O = 4-(trimethylamino)butanoate + NADH + 2 H(+). It catalyses the reaction 4-guanidinobutanal + NAD(+) + H2O = 4-guanidinobutanoate + NADH + 2 H(+). It participates in amine and polyamine biosynthesis; betaine biosynthesis via choline pathway; betaine from betaine aldehyde: step 1/1. Functionally, dehydrogenase that catalyzes the oxidation of several aminoaldehydes. Metabolizes and detoxifies aldehyde products of polyamine degradation to non-toxic amino acids. Catalyzes the oxidation of 4-aminobutanal and 3-aminopropanal to 4-aminobutanoate and beta-alanine, respectively. Catalyzes the oxidation of 4-(trimethylamino)butanal and 4-guanidinobutanal to 4-trimethylammoniobutanoate and 4-guanidinobutanoate, respectively. The sequence is that of Aminoaldehyde dehydrogenase 2 from Zea mays (Maize).